A 1072-amino-acid chain; its full sequence is Zn(2)-C6 fungal-type transcription factor FTF1a (1072 aa).

A DNA-binding region (zn(2)-C6 fungal-type) is located at residues 178–205; sequence CMACRRKKIRCSGEKPACKHCLRSRILC.

The protein resides in the nucleus. Its function is as follows. Zn(2)-C6 fungal-type transcription factor that has a role in the establishment of the fungus within the plant and/or the progress of the disease. Regulates the expression of virulence factors such as SIX1 and SIX6. In Fusarium oxysporum f. sp. lycopersici (strain 4287 / CBS 123668 / FGSC 9935 / NRRL 34936) (Fusarium vascular wilt of tomato), this protein is Zn(2)-C6 fungal-type transcription factor FTF1a.